A 254-amino-acid chain; its full sequence is Segregation and condensation protein A (254 aa).

The protein belongs to the ScpA family. Component of a cohesin-like complex composed of ScpA, ScpB and the Smc homodimer, in which ScpA and ScpB bind to the head domain of Smc. The presence of the three proteins is required for the association of the complex with DNA.

The protein resides in the cytoplasm. Functionally, participates in chromosomal partition during cell division. May act via the formation of a condensin-like complex containing Smc and ScpB that pull DNA away from mid-cell into both cell halves. This chain is Segregation and condensation protein A, found in Brevibacillus brevis (strain 47 / JCM 6285 / NBRC 100599).